Reading from the N-terminus, the 131-residue chain is MSMSDPIADMLTRIRNAQMVEKVSVSMPSSKVKVAIAQVLKDEGYIDDFAVKADGAKAELNIALKYYAGRPVIERLERVSKPGLRVYRGRNEIPQVMNGLGVAIVSTPKGVMTDRKARATGVGGEVICYVA.

Belongs to the universal ribosomal protein uS8 family. Part of the 30S ribosomal subunit. Contacts proteins S5 and S12.

Its function is as follows. One of the primary rRNA binding proteins, it binds directly to 16S rRNA central domain where it helps coordinate assembly of the platform of the 30S subunit. This is Small ribosomal subunit protein uS8 from Burkholderia mallei (strain NCTC 10247).